Consider the following 145-residue polypeptide: 3-hydroxyacyl-[acyl-carrier-protein] dehydratase FabZ (145 aa).

Residue His49 is part of the active site.

This sequence belongs to the thioester dehydratase family. FabZ subfamily.

Its subcellular location is the cytoplasm. The enzyme catalyses a (3R)-hydroxyacyl-[ACP] = a (2E)-enoyl-[ACP] + H2O. In terms of biological role, involved in unsaturated fatty acids biosynthesis. Catalyzes the dehydration of short chain beta-hydroxyacyl-ACPs and long chain saturated and unsaturated beta-hydroxyacyl-ACPs. In Rickettsia massiliae (strain Mtu5), this protein is 3-hydroxyacyl-[acyl-carrier-protein] dehydratase FabZ.